The sequence spans 244 residues: Protein YIPF4 (244 aa).

Residues 1-113 are Cytoplasmic-facing; the sequence is MQPPGPPPAY…FNRQVVRDNP (113 aa). Residues 114–134 traverse the membrane as a helical segment; the sequence is DFWGPLAVVLFFSMISLYGQF. The Extracellular portion of the chain corresponds to 135–138; the sequence is RVVS. The chain crosses the membrane as a helical span at residues 139-159; it reads WIITIWIFGSLTIFLLARVLG. Over 160 to 166 the chain is Cytoplasmic; it reads GEVAYGQ. Residues 167 to 187 traverse the membrane as a helical segment; that stretch reads VLGVIGYSLLPLIVIAPVLLV. Residues 188–195 are Extracellular-facing; sequence VGSFEVVS. The helical transmembrane segment at 196–216 threads the bilayer; the sequence is TLIKLFGVFWAAYSAASLLVG. The Cytoplasmic segment spans residues 217 to 223; the sequence is EEFKTKK. Residues 224–244 form a helical membrane-spanning segment; that stretch reads PLLIYPIFLLYIYFLSLYTGV.

This sequence belongs to the YIP1 family. In terms of assembly, interacts with YIPF3 and YIPF5. As to quaternary structure, (Microbial infection) Interacts with human papillomavirus (HPV) E5 proteins. In terms of tissue distribution, expressed in keratinocytes (at protein level).

It localises to the golgi apparatus. The protein resides in the cis-Golgi network membrane. Its function is as follows. Involved in the maintenance of the Golgi structure. The sequence is that of Protein YIPF4 (YIPF4) from Homo sapiens (Human).